A 514-amino-acid polypeptide reads, in one-letter code: Protein Tube (514 aa).

Disordered regions lie at residues 226–250, 255–274, 324–343, 366–385, and 413–514; these read VPQQ…RSSR, TASN…SNTA, LDAG…STST, ASDA…VPDM, and NGAK…ELQQ. Positions 259–274 are enriched in low complexity; that stretch reads VAPTTASNAPSASNTA. Residues 422-433 show a composition bias toward polar residues; sequence ADNNSSGTNSLS. The span at 434–460 shows a compositional bias: acidic residues; that stretch reads NDDDEQKEDDDDDDDDDVVDVDDEEAD. The span at 477-514 shows a compositional bias: polar residues; sequence TTVTCTSGENSFEFTNDSSSASNDDYTNNIPNLSELQQ.

In terms of tissue distribution, maternal and zygotic gene product.

Its subcellular location is the cytoplasm. In terms of biological role, required for the determination of embryonic dorsoventral polarity. Is involved in transduction of information regulating nuclear import of dorsal protein. This Drosophila virilis (Fruit fly) protein is Protein Tube (tub).